Reading from the N-terminus, the 1122-residue chain is MNSPNESDGMSGREPSLEILPRTSLHSIPVTVEVKPVLPRAMPSSMGGGGGGSPSPVELRGALVGSVDPTLREQQLQQELLALKQQQQLQKQLLFAEFQKQHDHLTRQHEVQLQKHLKQQQEMLAAKQQQEMLAAKRQQELEQQRQREQQRQEELEKQRLEQQLLILRNKEKSKESAIASTEVKLRLQEFLLSKSKEPTPGGLNHSLPQHPKCWGAHHASLDQSSPPQSGPPGTPPSYKLPLPGPYDSRDDFPLRKTASEPNLKVRSRLKQKVAERRSSPLLRRKDGTVISTFKKRAVEITGAGPGASSVCNSAPGSGPSSPNSSHSTIAENGFTGSVPNIPTEMLPQHRALPLDSSPNQFSLYTSPSLPNISLGLQATVTVTNSHLTASPKLSTQQEAERQALQSLRQGGTLTGKFMSTSSIPGCLLGVALEGDGSPHGHASLLQHVLLLEQARQQSTLIAVPLHGQSPLVTGERVATSMRTVGKLPRHRPLSRTQSSPLPQSPQALQQLVMQQQHQQFLEKQKQQQLQLGKILTKTGELPRQPTTHPEETEEELTEQQEVLLGEGALTMPREGSTESESTQEDLEEEDEEDDGEEEEDCIQVKDEEGESGAEEGPDLEEPGAGYKKLFSDAQPLQPLQVYQAPLSLATVPHQALGRTQSSPAAPGGMKSPPDQPVKHLFTTGVVYDTFMLKHQCMCGNTHVHPEHAGRIQSIWSRLQETGLLSKCERIRGRKATLDEIQTVHSEYHTLLYGTSPLNRQKLDSKKLLGPISQKMYAVLPCGGIGVDSDTVWNEMHSSSAVRMAVGCLLELAFKVAAGELKNGFAIIRPPGHHAEESTAMGFCFFNSVAITAKLLQQKLNVGKVLIVDWDIHHGNGTQQAFYNDPSVLYISLHRYDNGNFFPGSGAPEEVGGGPGVGYNVNVAWTGGVDPPIGDVEYLTAFRTVVMPIAHEFSPDVVLVSAGFDAVEGHLSPLGGYSVTARCFGHLTRQLMTLAGGRVVLALEGGHDLTAICDASEACVSALLSVELQPLDEAVLQQKPNINAVATLEKVIEIQSKHWSCVQKFAAGLGRSLREAQAGETEEAETVSAMALLSVGAEQAQAAAAREHSPRPAEEPMEQEPAL.

The interval 1–24 (MNSPNESDGMSGREPSLEILPRTS) is disordered. Lysine 35 is covalently cross-linked (Glycyl lysine isopeptide (Lys-Gly) (interchain with G-Cter in SUMO2)). Disordered regions lie at residues 41–60 (AMPS…VELR) and 196–281 (KEPT…SSPL). A compositionally biased stretch (basic and acidic residues) spans 247 to 258 (DSRDDFPLRKTA). Phosphoserine; by AMPK, CaMK1, SIK1 and PKD/PRKD1 is present on serine 259. The span at 272-281 (KVAERRSSPL) shows a compositional bias: basic and acidic residues. A Phosphothreonine; by PKC modification is found at threonine 292. 2 disordered regions span residues 302–343 (GAGP…NIPT) and 481–504 (MRTV…LPQS). The span at 312–327 (NSAPGSGPSSPNSSHS) shows a compositional bias: low complexity. Polar residues predominate over residues 328–340 (TIAENGFTGSVPN). Low complexity predominate over residues 494–504 (SRTQSSPLPQS). Position 498 is a phosphoserine; by AMPK, CaMK1, SIK1 and PKD/PRKD1 (serine 498). Lysine 533 carries the post-translational modification N6-acetyllysine. The interval 536-625 (TKTGELPRQP…GPDLEEPGAG (90 aa)) is disordered. Acidic residues predominate over residues 581-621 (STQEDLEEEDEEDDGEEEEDCIQVKDEEGESGAEEGPDLEE). A phosphoserine mark is found at serine 611 and serine 661. The histone deacetylase stretch occupies residues 684–1028 (GVVYDTFMLK…VSALLSVELQ (345 aa)). Residues cysteine 696, cysteine 698, histidine 704, and cysteine 781 each contribute to the Zn(2+) site. Residue histidine 833 is part of the active site. The short motif at 1081 to 1122 (EEAETVSAMALLSVGAEQAQAAAAREHSPRPAEEPMEQEPAL) is the Nuclear export signal element. Positions 1097 to 1122 (EQAQAAAAREHSPRPAEEPMEQEPAL) are disordered. Residues 1104-1113 (AREHSPRPAE) show a composition bias toward basic and acidic residues. Serine 1108 carries the phosphoserine modification.

Belongs to the histone deacetylase family. HD type 2 subfamily. As to quaternary structure, interacts with AHRR, BAHD1, BCOR, HDAC7, HDAC9, CTBP1, MEF2C, NCOR2, NRIP1, PHB2 and a 14-3-3 chaperone protein. Interacts with BCL6, DDIT3/CHOP, GRK5, KDM5B and MYOCD. Interacts with EP300 in the presence of TFAP2C. Interacts with ANKRA2. Interacts with CUL7 (as part of the 3M complex); negatively regulated by ANKRA2. Interacts with ZBTB7B; the interaction allows the recruitment of HDAC4 on CD8 loci for deacetylation and possible inhibition of CD8 genes expression. Interacts with RARA. Post-translationally, phosphorylated by AMPK, CaMK1, SIK1 and PRKD1 at Ser-259 and Ser-498. The phosphorylation is required for the export to the cytoplasm and inhibition. Phosphorylated by the PKC kinases PKN1 and PKN2, impairing nuclear import. Phosphorylated by GRK5, leading to nuclear export of HDAC5 and allowing MEF2-mediated transcription. In terms of processing, ubiquitinated. Polyubiquitination however does not lead to its degradation. In terms of tissue distribution, ubiquitous.

Its subcellular location is the nucleus. It localises to the cytoplasm. The catalysed reaction is N(6)-acetyl-L-lysyl-[histone] + H2O = L-lysyl-[histone] + acetate. Functionally, responsible for the deacetylation of lysine residues on the N-terminal part of the core histones (H2A, H2B, H3 and H4). Histone deacetylation gives a tag for epigenetic repression and plays an important role in transcriptional regulation, cell cycle progression and developmental events. Histone deacetylases act via the formation of large multiprotein complexes. Involved in muscle maturation by repressing transcription of myocyte enhancer MEF2C. During muscle differentiation, it shuttles into the cytoplasm, allowing the expression of myocyte enhancer factors. Involved in the MTA1-mediated epigenetic regulation of ESR1 expression in breast cancer. Serves as a corepressor of RARA and causes its deacetylation. In association with RARA, plays a role in the repression of microRNA-10a and thereby in the inflammatory response. This is Histone deacetylase 5 (HDAC5) from Homo sapiens (Human).